Reading from the N-terminus, the 288-residue chain is Ubiquitin thioesterase otubain-like (288 aa).

Residues 76 to 275 (SHIRFIRGDG…PGHYDLIYKA (200 aa)) enclose the OTU domain. Asp84 is a catalytic residue. Residue Cys87 is the Nucleophile of the active site. Ile175 contacts substrate. Residues His244 and His268 contribute to the active site.

This sequence belongs to the peptidase C65 family.

It carries out the reaction Thiol-dependent hydrolysis of ester, thioester, amide, peptide and isopeptide bonds formed by the C-terminal Gly of ubiquitin (a 76-residue protein attached to proteins as an intracellular targeting signal).. In terms of biological role, hydrolase that can remove conjugated ubiquitin from proteins and plays an important regulatory role at the level of protein turnover by preventing degradation. Specifically cleaves 'Lys-48'-linked polyubiquitin. In Caenorhabditis briggsae, this protein is Ubiquitin thioesterase otubain-like.